The sequence spans 794 residues: K(+)-insensitive pyrophosphate-energized proton pump (794 aa).

5 helical membrane passes run alanine 20–valine 40, threonine 74–tryptophan 94, isoleucine 102–alanine 122, glycine 163–valine 183, and glycine 194–threonine 214. A substrate-binding site is contributed by lysine 215. Positions 218, 222, 245, and 248 each coordinate Mg(2+). 6 helical membrane-spanning segments follow: residues tyrosine 264 to leucine 284, alanine 285 to valine 305, glycine 321 to leucine 341, isoleucine 365 to threonine 385, alanine 422 to threonine 442, and leucine 446 to valine 466. Aspartate 476 is a Mg(2+) binding site. 3 consecutive transmembrane segments (helical) span residues alanine 508–serine 528, valine 564–valine 584, and isoleucine 641–glycine 661. The Ca(2+) site is built by aspartate 678, aspartate 704, and aspartate 708. A substrate-binding site is contributed by lysine 711. The next 2 helical transmembrane spans lie at alanine 717–isoleucine 737 and valine 747–valine 767.

The protein belongs to the H(+)-translocating pyrophosphatase (TC 3.A.10) family. K(+)-insensitive subfamily. In terms of assembly, homodimer. Mg(2+) is required as a cofactor.

The protein resides in the cell membrane. The catalysed reaction is diphosphate + H2O + H(+)(in) = 2 phosphate + 2 H(+)(out). Functionally, proton pump that utilizes the energy of pyrophosphate hydrolysis as the driving force for proton movement across the membrane. Generates a proton motive force. This chain is K(+)-insensitive pyrophosphate-energized proton pump, found in Streptomyces coelicolor (strain ATCC BAA-471 / A3(2) / M145).